A 437-amino-acid chain; its full sequence is Ribosomal protein uS12 methylthiotransferase RimO (437 aa).

Residues 3–118 form the MTTase N-terminal domain; the sequence is KKFYITTLGC…AGKILREKFP (116 aa). Cysteine 12, cysteine 48, cysteine 81, cysteine 157, cysteine 161, and cysteine 164 together coordinate [4Fe-4S] cluster. Residues 143–370 form the Radical SAM core domain; it reads NYSKPYAYVK…RDSHLEILEE (228 aa). A TRAM domain is found at 373–437; it reads ESRIGRTYDA…YEYDMNGTWV (65 aa).

The protein belongs to the methylthiotransferase family. RimO subfamily. The cofactor is [4Fe-4S] cluster.

The protein localises to the cytoplasm. It catalyses the reaction L-aspartate(89)-[ribosomal protein uS12]-hydrogen + (sulfur carrier)-SH + AH2 + 2 S-adenosyl-L-methionine = 3-methylsulfanyl-L-aspartate(89)-[ribosomal protein uS12]-hydrogen + (sulfur carrier)-H + 5'-deoxyadenosine + L-methionine + A + S-adenosyl-L-homocysteine + 2 H(+). Its function is as follows. Catalyzes the methylthiolation of an aspartic acid residue of ribosomal protein uS12. In Leptospira interrogans serogroup Icterohaemorrhagiae serovar copenhageni (strain Fiocruz L1-130), this protein is Ribosomal protein uS12 methylthiotransferase RimO.